The chain runs to 1050 residues: Diacylglycerol kinase iota (1050 aa).

Disordered regions lie at residues 52–73 (NPSS…SGSG) and 325–356 (PQNS…ENKG). Residues 332-347 (SNRKKKRTSFKRKASK) are compositionally biased toward basic residues. One can recognise a DAGKc domain in the interval 367-502 (PLMKPLLVFV…DRWNLHVERN (136 aa)). ANK repeat units lie at residues 943–972 (GHCS…AELL) and 979–1008 (TGET…SLRQ). A PDZ-binding motif is present at residues 1048 to 1050 (TAV).

It belongs to the eukaryotic diacylglycerol kinase family. As to quaternary structure, interacts (via PDZ-binding motif) with DLG4; controls the localization of DGKI to the synapse. Interacts (via PDZ-binding motif) with DLG1. Interacts (via PDZ-binding motif) with DLG2. Interacts (via PDZ-binding motif) with DLG3. May interact with RASGRP3; involved in the regulation of RASGRP3 activity. Specifically expressed in brain (at protein level). Expressed in hippocampus, cerebellum, brain stem and spinal cord (at protein level). Highly expressed in hippocampus, cerebellar cortex, olfactory bulb, and olfactory tubercle and to lower extent in the cerebral cortex, caudate putamen, and thalamus. Not detected in the white matter. Also expressed in eye. As to expression, major isoform in brain (at protein level). In terms of tissue distribution, minor isoform in brain (at protein level). Expressed in brain (at protein level).

It is found in the cell projection. It localises to the axon. The protein resides in the dendrite. Its subcellular location is the presynapse. The protein localises to the postsynapse. It is found in the postsynaptic density. It localises to the synaptic cell membrane. The protein resides in the cytoplasmic vesicle. Its subcellular location is the secretory vesicle. The protein localises to the synaptic vesicle membrane. It is found in the cytoplasm. It localises to the cytosol. The protein resides in the nucleus. The catalysed reaction is a 1,2-diacyl-sn-glycerol + ATP = a 1,2-diacyl-sn-glycero-3-phosphate + ADP + H(+). It catalyses the reaction 1,2-di-(9Z-octadecenoyl)-sn-glycerol + ATP = 1,2-di-(9Z-octadecenoyl)-sn-glycero-3-phosphate + ADP + H(+). It carries out the reaction 1-octadecanoyl-2-(9Z,12Z)-octadecadienoyl-sn-glycerol + ATP = 1-octadecanoyl-2-(9Z,12Z-octadecadienoyl)-sn-glycero-3-phosphate + ADP + H(+). The enzyme catalyses 1-octadecanoyl-2-(5Z,8Z,11Z,14Z-eicosatetraenoyl)-sn-glycerol + ATP = 1-octadecanoyl-2-(5Z,8Z,11Z,14Z-eicosatetraenoyl)-sn-glycero-3-phosphate + ADP + H(+). The protein operates within lipid metabolism; glycerolipid metabolism. With respect to regulation, activated by phosphatidylserine. Functionally, diacylglycerol kinase that converts diacylglycerol/DAG into phosphatidic acid/phosphatidate/PA and regulates the respective levels of these two bioactive lipids. Thereby, acts as a central switch between the signaling pathways activated by these second messengers with different cellular targets and opposite effects in numerous biological processes. Has probably no preference for any of the diacylglycerols in terms of the acyl chain composition, especially for the acyl chain at the sn-2 position. By controlling the diacylglycerol/DAG-mediated activation of RASGRP3, negatively regulates the Rap1 signaling pathway. May play a role in presynaptic diacylglycerol/DAG signaling and control neurotransmitter release during metabotropic glutamate receptor-dependent long-term depression. In terms of biological role, has a decreased affinity for ATP and a reduced diacylglycerol kinase activity. Has no preference for any of the diacylglycerols in terms of the acyl chain composition. Has no diacylglycerol kinase activity. This Rattus norvegicus (Rat) protein is Diacylglycerol kinase iota.